The primary structure comprises 594 residues: UV-stimulated scaffold protein A homolog (594 aa).

Residues 24-170 are VHS-like; that stretch reads RKNLNRFIRE…VTLKKTKFVD (147 aa). The stretch at 170 to 198 forms a coiled coil; it reads DYENGAKKIEAERKRKKILEERKMKMIEN. A UVSSA-type zinc finger spans residues 466–493; that stretch reads RKVCLAKMKSGKLCPRKDYYTCPLHGKI. Residues C469, C479, C487, and H490 each coordinate Zn(2+). Residues 503 to 540 adopt a coiled-coil conformation; sequence INEEDRLEENYRKEQNHLKEADKIRQMIEKEYESKTKR. The disordered stretch occupies residues 533–558; it reads EYESKTKRRKKHDVDTTASEDVRNRL. The span at 544–558 shows a compositional bias: basic and acidic residues; that stretch reads HDVDTTASEDVRNRL.

It belongs to the UVSSA family.

The protein resides in the chromosome. In terms of biological role, factor involved in transcription-coupled nucleotide excision repair (TC-NER) in response to UV damage. TC-NER allows RNA polymerase II-blocking lesions to be rapidly removed from the transcribed strand of active genes. The protein is UV-stimulated scaffold protein A homolog of Caenorhabditis elegans.